The sequence spans 314 residues: Ornithine carbamoyltransferase (314 aa).

Residues 61–64 (STRT), Gln88, Arg112, and 139–142 (HPCQ) each bind carbamoyl phosphate. Residues Asn170, Asp234, and 238–239 (SM) each bind L-ornithine. Carbamoyl phosphate-binding positions include 274–275 (CL) and Arg302.

This sequence belongs to the aspartate/ornithine carbamoyltransferase superfamily. OTCase family.

The protein resides in the cytoplasm. It carries out the reaction carbamoyl phosphate + L-ornithine = L-citrulline + phosphate + H(+). It functions in the pathway amino-acid biosynthesis; L-arginine biosynthesis; L-arginine from L-ornithine and carbamoyl phosphate: step 1/3. In terms of biological role, reversibly catalyzes the transfer of the carbamoyl group from carbamoyl phosphate (CP) to the N(epsilon) atom of ornithine (ORN) to produce L-citrulline. This Anoxybacillus flavithermus (strain DSM 21510 / WK1) protein is Ornithine carbamoyltransferase.